A 363-amino-acid polypeptide reads, in one-letter code: Glutamate 5-kinase (363 aa).

Lys6 is a binding site for ATP. Substrate contacts are provided by Ser46, Asp133, and Asn145. Residues 165–166 (TD) and 207–213 (TGGMHTK) contribute to the ATP site. Positions 271–349 (TGRLLLDEGA…RDIEAVLGFT (79 aa)) constitute a PUA domain.

The protein belongs to the glutamate 5-kinase family.

Its subcellular location is the cytoplasm. The enzyme catalyses L-glutamate + ATP = L-glutamyl 5-phosphate + ADP. It participates in amino-acid biosynthesis; L-proline biosynthesis; L-glutamate 5-semialdehyde from L-glutamate: step 1/2. Its function is as follows. Catalyzes the transfer of a phosphate group to glutamate to form L-glutamate 5-phosphate. The protein is Glutamate 5-kinase of Deinococcus geothermalis (strain DSM 11300 / CIP 105573 / AG-3a).